Consider the following 215-residue polypeptide: 24 kDa Ras-like protein (215 aa).

GTP is bound at residue 17–24 (GGGGVGKS). The Effector region signature appears at 39-47 (YDPTIEDSY). GTP is bound by residues 64–68 (DTAGQ) and 123–126 (NKCD). The disordered stretch occupies residues 179–199 (QTGRPAIAAGGGGPAGSYTQD). Cys212 is subject to Cysteine methyl ester. Cys212 carries S-farnesyl cysteine lipidation. Positions 213–215 (VIA) are cleaved as a propeptide — removed in mature form.

It belongs to the small GTPase superfamily. Ras family.

Its subcellular location is the cell membrane. It catalyses the reaction GTP + H2O = GDP + phosphate + H(+). Functionally, ras proteins bind GDP/GTP and possess intrinsic GTPase activity. The sequence is that of 24 kDa Ras-like protein (CC-RAS) from Coprinopsis cinerea (strain Okayama-7 / 130 / ATCC MYA-4618 / FGSC 9003) (Inky cap fungus).